The sequence spans 156 residues: RING finger protein 224 (156 aa).

An RING-type zinc finger spans residues 24 to 71; it reads CIICCSAYDLSGHLPRRLYCGHTFCQACVRRLDTPAPEQRWIPCPQCR.

In Homo sapiens (Human), this protein is RING finger protein 224 (RNF224).